The following is a 224-amino-acid chain: NADH-quinone oxidoreductase subunit B (224 aa).

[4Fe-4S] cluster is bound by residues Cys-67, Cys-68, Cys-133, and Cys-162. A disordered region spans residues 200-224 (DMPAEKDRKRGERIKVTNLRTPDEI). Residues 201–224 (MPAEKDRKRGERIKVTNLRTPDEI) are compositionally biased toward basic and acidic residues.

It belongs to the complex I 20 kDa subunit family. NDH-1 is composed of 14 different subunits. Subunits NuoB, C, D, E, F, and G constitute the peripheral sector of the complex. [4Fe-4S] cluster serves as cofactor.

It localises to the cell inner membrane. The enzyme catalyses a quinone + NADH + 5 H(+)(in) = a quinol + NAD(+) + 4 H(+)(out). Its function is as follows. NDH-1 shuttles electrons from NADH, via FMN and iron-sulfur (Fe-S) centers, to quinones in the respiratory chain. The immediate electron acceptor for the enzyme in this species is believed to be ubiquinone. Couples the redox reaction to proton translocation (for every two electrons transferred, four hydrogen ions are translocated across the cytoplasmic membrane), and thus conserves the redox energy in a proton gradient. This Aeromonas salmonicida (strain A449) protein is NADH-quinone oxidoreductase subunit B.